The following is a 59-amino-acid chain: Large ribosomal subunit protein bL32 (59 aa).

Residues 1–34 form a disordered region; it reads MAVQKSKVTRSRRGQRRSHDALTGPTLSVDKTTG. Over residues 7 to 16 the composition is skewed to basic residues; the sequence is KVTRSRRGQR.

It belongs to the bacterial ribosomal protein bL32 family.

The protein is Large ribosomal subunit protein bL32 of Marinomonas sp. (strain MWYL1).